A 216-amino-acid polypeptide reads, in one-letter code: Guanylate kinase (216 aa).

Positions 15–193 (GNLFMVVAPS…ALEELRNVVR (179 aa)) constitute a Guanylate kinase-like domain. An ATP-binding site is contributed by 22–29 (APSGAGKS).

This sequence belongs to the guanylate kinase family.

Its subcellular location is the cytoplasm. The enzyme catalyses GMP + ATP = GDP + ADP. In terms of biological role, essential for recycling GMP and indirectly, cGMP. This Cupriavidus pinatubonensis (strain JMP 134 / LMG 1197) (Cupriavidus necator (strain JMP 134)) protein is Guanylate kinase.